Consider the following 135-residue polypeptide: Ribosome-binding factor A (135 aa).

It belongs to the RbfA family. Monomer. Binds 30S ribosomal subunits, but not 50S ribosomal subunits or 70S ribosomes.

The protein resides in the cytoplasm. Its function is as follows. One of several proteins that assist in the late maturation steps of the functional core of the 30S ribosomal subunit. Associates with free 30S ribosomal subunits (but not with 30S subunits that are part of 70S ribosomes or polysomes). Required for efficient processing of 16S rRNA. May interact with the 5'-terminal helix region of 16S rRNA. The polypeptide is Ribosome-binding factor A (Bartonella henselae (strain ATCC 49882 / DSM 28221 / CCUG 30454 / Houston 1) (Rochalimaea henselae)).